The sequence spans 527 residues: Putative ABC transporter peptide-binding protein BOV_A0352 (527 aa).

An N-terminal signal peptide occupies residues 1 to 23; it reads MRLRNFYSALALSAAVFAGPLYA.

Belongs to the bacterial solute-binding protein 5 family. In terms of assembly, the complex is composed of two ATP-binding proteins (BOV_A0347 and BOV_A0348), two transmembrane proteins (BOV_A0350 and BOV_A0351) and a solute-binding protein (BOV_A0352).

The protein localises to the periplasm. Functionally, probably part of an ABC transporter complex that could be involved in peptide import. The chain is Putative ABC transporter peptide-binding protein BOV_A0352 from Brucella ovis (strain ATCC 25840 / 63/290 / NCTC 10512).